The primary structure comprises 236 residues: Phosphoribosylaminoimidazole-succinocarboxamide synthase (236 aa).

Belongs to the SAICAR synthetase family.

The catalysed reaction is 5-amino-1-(5-phospho-D-ribosyl)imidazole-4-carboxylate + L-aspartate + ATP = (2S)-2-[5-amino-1-(5-phospho-beta-D-ribosyl)imidazole-4-carboxamido]succinate + ADP + phosphate + 2 H(+). The protein operates within purine metabolism; IMP biosynthesis via de novo pathway; 5-amino-1-(5-phospho-D-ribosyl)imidazole-4-carboxamide from 5-amino-1-(5-phospho-D-ribosyl)imidazole-4-carboxylate: step 1/2. This Rickettsia massiliae (strain Mtu5) protein is Phosphoribosylaminoimidazole-succinocarboxamide synthase.